The chain runs to 437 residues: Glutamate-1-semialdehyde 2,1-aminomutase (437 aa).

The residue at position 274 (K274) is an N6-(pyridoxal phosphate)lysine.

Belongs to the class-III pyridoxal-phosphate-dependent aminotransferase family. HemL subfamily. As to quaternary structure, homodimer. Requires pyridoxal 5'-phosphate as cofactor.

Its subcellular location is the cytoplasm. It catalyses the reaction (S)-4-amino-5-oxopentanoate = 5-aminolevulinate. It functions in the pathway porphyrin-containing compound metabolism; protoporphyrin-IX biosynthesis; 5-aminolevulinate from L-glutamyl-tRNA(Glu): step 2/2. The chain is Glutamate-1-semialdehyde 2,1-aminomutase from Leptothrix cholodnii (strain ATCC 51168 / LMG 8142 / SP-6) (Leptothrix discophora (strain SP-6)).